The sequence spans 154 residues: Ubiquitin-like protein 4A (154 aa).

The Ubiquitin-like domain maps to 1–76 (MILTVKPLQG…LNLVVRPAGE (76 aa)).

In terms of assembly, component of the bag6/bat3 complex.

Its subcellular location is the cytoplasm. It is found in the cytosol. The protein localises to the nucleus. Functionally, as part of a cytosolic protein quality control complex, the bag6/bat3 complex, maintains misfolded and hydrophobic patches-containing proteins in a soluble state and participates in their proper delivery to the endoplasmic reticulum or alternatively can promote their sorting to the proteasome where they undergo degradation. The bag6/bat3 complex is involved in the post-translational delivery of tail-anchored/type II transmembrane proteins to the endoplasmic reticulum membrane. Similarly, the bag6/bat3 complex also functions as a sorting platform for proteins of the secretory pathway that are mislocalized to the cytosol either delivering them to the proteasome for degradation or to the endoplasmic reticulum. The bag6/bat3 complex also plays a role in the endoplasmic reticulum-associated degradation (ERAD), a quality control mechanism that eliminates unwanted proteins of the endoplasmic reticulum through their retrotranslocation to the cytosol and their targeting to the proteasome. It maintains these retrotranslocated proteins in an unfolded yet soluble state condition in the cytosol to ensure their proper delivery to the proteasome. This Esox lucius (Northern pike) protein is Ubiquitin-like protein 4A (ubl4a).